The sequence spans 138 residues: Large ribosomal subunit protein uL14 (138 aa).

Belongs to the universal ribosomal protein uL14 family. Part of the 50S ribosomal subunit. Forms a cluster with proteins L3 and L24e, part of which may contact the 16S rRNA in 2 intersubunit bridges.

In terms of biological role, binds to 23S rRNA. Forms part of two intersubunit bridges in the 70S ribosome. This Metallosphaera sedula (strain ATCC 51363 / DSM 5348 / JCM 9185 / NBRC 15509 / TH2) protein is Large ribosomal subunit protein uL14.